A 146-amino-acid polypeptide reads, in one-letter code: Actin-depolymerizing factor 6 (146 aa).

Residue serine 13 is modified to Phosphoserine. Positions 14–146 (GMGVADESKT…DLEVLRERAN (133 aa)) constitute an ADF-H domain.

Belongs to the actin-binding proteins ADF family. In terms of processing, phosphorylated. As to expression, expressed in vascular tissues of all organs.

It is found in the cytoplasm. It localises to the cytoskeleton. Actin-depolymerizing protein. Severs actin filaments (F-actin) and binds to actin monomers. This Arabidopsis thaliana (Mouse-ear cress) protein is Actin-depolymerizing factor 6 (ADF6).